The primary structure comprises 316 residues: Homoserine O-succinyltransferase (316 aa).

Cysteine 142 acts as the Acyl-thioester intermediate in catalysis. 2 residues coordinate substrate: lysine 163 and serine 192. Histidine 235 functions as the Proton acceptor in the catalytic mechanism. Residue glutamate 237 is part of the active site. Arginine 249 serves as a coordination point for substrate.

Belongs to the MetA family.

The protein localises to the cytoplasm. The enzyme catalyses L-homoserine + succinyl-CoA = O-succinyl-L-homoserine + CoA. It functions in the pathway amino-acid biosynthesis; L-methionine biosynthesis via de novo pathway; O-succinyl-L-homoserine from L-homoserine: step 1/1. Transfers a succinyl group from succinyl-CoA to L-homoserine, forming succinyl-L-homoserine. This is Homoserine O-succinyltransferase from Shewanella amazonensis (strain ATCC BAA-1098 / SB2B).